A 222-amino-acid chain; its full sequence is Protein SHI RELATED SEQUENCE 4 (222 aa).

Cysteine 72, cysteine 75, cysteine 83, cysteine 88, cysteine 92, and cysteine 99 together coordinate Zn(2+). A DNA-binding region (zn(2)-C6 fungal-type; degenerate) is located at residues 72–99; it reads CQECGNQAKKGCTHGRCRTCCKSNGLHC. The disordered stretch occupies residues 114 to 137; that stretch reads RERQQQLQTPTSNPTGGSGRVGKY. Over residues 118-128 the composition is skewed to polar residues; sequence QQLQTPTSNPT. The Required for homo- and heterodimerization motif lies at 191–194; sequence IAGH.

The protein belongs to the SHI protein family. As to expression, expressed in cotyledon tips, leaf primordia, hydathodes, stipules, and lateral root primordia and weakly at the edges of petals and sepals.

The protein resides in the nucleus. Transcription activator that binds DNA on 5'-ACTCTAC-3' and promotes auxin homeostasis-regulating gene expression (e.g. YUC genes), as well as genes affecting stamen development, cell expansion and timing of flowering. Synergistically with other SHI-related proteins, regulates gynoecium, stamen and leaf development in a dose-dependent manner, controlling apical-basal patterning. Promotes style and stigma formation, and influences vascular development during gynoecium development. May also have a role in the formation and/or maintenance of the shoot apical meristem (SAM). The sequence is that of Protein SHI RELATED SEQUENCE 4 (SRS4) from Arabidopsis thaliana (Mouse-ear cress).